The following is a 316-amino-acid chain: tRNA(Ile)-lysidine synthase (316 aa).

33-38 (SGGTDS) is a binding site for ATP.

This sequence belongs to the tRNA(Ile)-lysidine synthase family.

Its subcellular location is the cytoplasm. The enzyme catalyses cytidine(34) in tRNA(Ile2) + L-lysine + ATP = lysidine(34) in tRNA(Ile2) + AMP + diphosphate + H(+). Functionally, ligates lysine onto the cytidine present at position 34 of the AUA codon-specific tRNA(Ile) that contains the anticodon CAU, in an ATP-dependent manner. Cytidine is converted to lysidine, thus changing the amino acid specificity of the tRNA from methionine to isoleucine. In Bdellovibrio bacteriovorus (strain ATCC 15356 / DSM 50701 / NCIMB 9529 / HD100), this protein is tRNA(Ile)-lysidine synthase.